A 456-amino-acid polypeptide reads, in one-letter code: Bifunctional protein GlmU (456 aa).

The segment at 1-228 is pyrophosphorylase; the sequence is MTLPLHVLIL…PQDVEGANDP (228 aa). UDP-N-acetyl-alpha-D-glucosamine is bound by residues 10–13, K24, Q76, 81–82, 103–105, G138, E153, N168, and N226; these read LAAG, GT, and YGD. D105 lines the Mg(2+) pocket. N226 is a binding site for Mg(2+). The interval 229–249 is linker; sequence WQLAQLERAWQLRAARTLCLQ. Residues 250–456 form an N-acetyltransferase region; sequence GVRMADPARV…GWKRPTKKSP (207 aa). UDP-N-acetyl-alpha-D-glucosamine contacts are provided by R332 and K350. The Proton acceptor role is filled by H362. 2 residues coordinate UDP-N-acetyl-alpha-D-glucosamine: Y365 and N376. Acetyl-CoA is bound by residues A379, 385–386, S404, A422, and R439; that span reads NY.

The protein in the N-terminal section; belongs to the N-acetylglucosamine-1-phosphate uridyltransferase family. This sequence in the C-terminal section; belongs to the transferase hexapeptide repeat family. As to quaternary structure, homotrimer. Requires Mg(2+) as cofactor.

Its subcellular location is the cytoplasm. It catalyses the reaction alpha-D-glucosamine 1-phosphate + acetyl-CoA = N-acetyl-alpha-D-glucosamine 1-phosphate + CoA + H(+). The enzyme catalyses N-acetyl-alpha-D-glucosamine 1-phosphate + UTP + H(+) = UDP-N-acetyl-alpha-D-glucosamine + diphosphate. It participates in nucleotide-sugar biosynthesis; UDP-N-acetyl-alpha-D-glucosamine biosynthesis; N-acetyl-alpha-D-glucosamine 1-phosphate from alpha-D-glucosamine 6-phosphate (route II): step 2/2. Its pathway is nucleotide-sugar biosynthesis; UDP-N-acetyl-alpha-D-glucosamine biosynthesis; UDP-N-acetyl-alpha-D-glucosamine from N-acetyl-alpha-D-glucosamine 1-phosphate: step 1/1. The protein operates within bacterial outer membrane biogenesis; LPS lipid A biosynthesis. Its function is as follows. Catalyzes the last two sequential reactions in the de novo biosynthetic pathway for UDP-N-acetylglucosamine (UDP-GlcNAc). The C-terminal domain catalyzes the transfer of acetyl group from acetyl coenzyme A to glucosamine-1-phosphate (GlcN-1-P) to produce N-acetylglucosamine-1-phosphate (GlcNAc-1-P), which is converted into UDP-GlcNAc by the transfer of uridine 5-monophosphate (from uridine 5-triphosphate), a reaction catalyzed by the N-terminal domain. In Xanthomonas axonopodis pv. citri (strain 306), this protein is Bifunctional protein GlmU.